A 1153-amino-acid polypeptide reads, in one-letter code: Probable RNA-dependent RNA polymerase 3 (1153 aa).

The protein belongs to the RdRP family. As to expression, expressed in shoot apical meristem (SAM) and panicles.

The catalysed reaction is RNA(n) + a ribonucleoside 5'-triphosphate = RNA(n+1) + diphosphate. Probably involved in the RNA silencing pathway and required for the generation of small interfering RNAs (siRNAs). The sequence is that of Probable RNA-dependent RNA polymerase 3 (RDR3) from Oryza sativa subsp. japonica (Rice).